Reading from the N-terminus, the 226-residue chain is Lipoprotein-releasing system ATP-binding protein LolD (226 aa).

Positions 5–225 (LELVEIERHF…TLKEKKIVEL (221 aa)) constitute an ABC transporter domain. 41–48 (APSGAGKS) contributes to the ATP binding site.

It belongs to the ABC transporter superfamily. Lipoprotein translocase (TC 3.A.1.125) family. As to quaternary structure, the complex is composed of two ATP-binding proteins (LolD) and two transmembrane proteins (LolC and LolE).

The protein resides in the cell inner membrane. Part of the ABC transporter complex LolCDE involved in the translocation of mature outer membrane-directed lipoproteins, from the inner membrane to the periplasmic chaperone, LolA. Responsible for the formation of the LolA-lipoprotein complex in an ATP-dependent manner. In Bartonella quintana (strain Toulouse) (Rochalimaea quintana), this protein is Lipoprotein-releasing system ATP-binding protein LolD.